Consider the following 300-residue polypeptide: 33 kDa chaperonin (300 aa).

2 disulfides stabilise this stretch: C247/C249 and C280/C283.

Belongs to the HSP33 family. In terms of processing, under oxidizing conditions two disulfide bonds are formed involving the reactive cysteines. Under reducing conditions zinc is bound to the reactive cysteines and the protein is inactive.

The protein localises to the cytoplasm. Functionally, redox regulated molecular chaperone. Protects both thermally unfolding and oxidatively damaged proteins from irreversible aggregation. Plays an important role in the bacterial defense system toward oxidative stress. The sequence is that of 33 kDa chaperonin from Prochlorococcus marinus (strain MIT 9312).